Reading from the N-terminus, the 159-residue chain is MNITIISVGKLKEKYLKHAIDEYSKRLSRYCKLNIVELQDEQTPDNASEKDELIIKDKEGNKILNSIKDNMYVITLDLKGKMISSEELSKFIDNCGVRGNSNLCFIIGGSLGLSEAVLKRSNYSLCFSKMTFPHQLFRVMLLEQIYRAFRISNGEPYHK.

Residues Leu-76, Gly-108, and 127 to 132 contribute to the S-adenosyl-L-methionine site; that span reads FSKMTF.

This sequence belongs to the RNA methyltransferase RlmH family. In terms of assembly, homodimer.

It is found in the cytoplasm. The enzyme catalyses pseudouridine(1915) in 23S rRNA + S-adenosyl-L-methionine = N(3)-methylpseudouridine(1915) in 23S rRNA + S-adenosyl-L-homocysteine + H(+). In terms of biological role, specifically methylates the pseudouridine at position 1915 (m3Psi1915) in 23S rRNA. The protein is Ribosomal RNA large subunit methyltransferase H of Clostridium botulinum (strain Alaska E43 / Type E3).